A 142-amino-acid polypeptide reads, in one-letter code: Large ribosomal subunit protein uL13 (142 aa).

It belongs to the universal ribosomal protein uL13 family. In terms of assembly, part of the 50S ribosomal subunit.

Functionally, this protein is one of the early assembly proteins of the 50S ribosomal subunit, although it is not seen to bind rRNA by itself. It is important during the early stages of 50S assembly. The sequence is that of Large ribosomal subunit protein uL13 from Akkermansia muciniphila (strain ATCC BAA-835 / DSM 22959 / JCM 33894 / BCRC 81048 / CCUG 64013 / CIP 107961 / Muc).